Reading from the N-terminus, the 447-residue chain is Tubulin beta-2 chain (447 aa).

Residues Gln11, Glu69, Ser138, Gly142, Thr143, Gly144, Asn204, and Asn226 each contribute to the GTP site. Mg(2+) is bound at residue Glu69. Residues 426 to 447 (QDAGVDEEEEEYEEEAPLEEEV) are disordered. Residues 429–447 (GVDEEEEEYEEEAPLEEEV) are compositionally biased toward acidic residues.

Belongs to the tubulin family. Dimer of alpha and beta chains. A typical microtubule is a hollow water-filled tube with an outer diameter of 25 nm and an inner diameter of 15 nM. Alpha-beta heterodimers associate head-to-tail to form protofilaments running lengthwise along the microtubule wall with the beta-tubulin subunit facing the microtubule plus end conferring a structural polarity. Microtubules usually have 13 protofilaments but different protofilament numbers can be found in some organisms and specialized cells. Mg(2+) serves as cofactor.

The protein resides in the cytoplasm. It is found in the cytoskeleton. In terms of biological role, tubulin is the major constituent of microtubules, a cylinder consisting of laterally associated linear protofilaments composed of alpha- and beta-tubulin heterodimers. Microtubules grow by the addition of GTP-tubulin dimers to the microtubule end, where a stabilizing cap forms. Below the cap, tubulin dimers are in GDP-bound state, owing to GTPase activity of alpha-tubulin. This is Tubulin beta-2 chain (TUB2) from Colletotrichum gloeosporioides (Anthracnose fungus).